The chain runs to 273 residues: Putative phosphoenolpyruvate synthase regulatory protein (273 aa).

153-160 (GVSRSGKT) serves as a coordination point for ADP.

It belongs to the pyruvate, phosphate/water dikinase regulatory protein family. PSRP subfamily.

The enzyme catalyses [pyruvate, water dikinase] + ADP = [pyruvate, water dikinase]-phosphate + AMP + H(+). It catalyses the reaction [pyruvate, water dikinase]-phosphate + phosphate + H(+) = [pyruvate, water dikinase] + diphosphate. Bifunctional serine/threonine kinase and phosphorylase involved in the regulation of the phosphoenolpyruvate synthase (PEPS) by catalyzing its phosphorylation/dephosphorylation. The chain is Putative phosphoenolpyruvate synthase regulatory protein from Albidiferax ferrireducens (strain ATCC BAA-621 / DSM 15236 / T118) (Rhodoferax ferrireducens).